Here is a 532-residue protein sequence, read N- to C-terminus: 3-hydroxy-3-methylglutaryl-coenzyme A reductase 1 (532 aa).

Residues 63–83 form a helical membrane-spanning segment; the sequence is FATVVYLVSLFAHPDAPATTT. The tract at residues 77–117 is linker; the sequence is DAPATTTGDDDDGQGGSRRARPAAAEPAPMHGHGGGMMEAD. Residues 78–111 form a disordered region; the sequence is APATTTGDDDDGQGGSRRARPAAAEPAPMHGHGG. A compositionally biased stretch (low complexity) spans 98–107; the sequence is PAAAEPAPMH. Positions 118-532 are catalytic; sequence DEEIVAAVAS…SSKDVAKAAS (415 aa). The active-site Charge relay system is the glutamate 211. An N-linked (GlcNAc...) asparagine glycan is attached at asparagine 275. Residues lysine 343 and aspartate 419 each act as charge relay system in the active site. Histidine 517 acts as the Proton donor in catalysis. A glycan (N-linked (GlcNAc...) asparagine) is linked at asparagine 521.

Belongs to the HMG-CoA reductase family.

It localises to the endoplasmic reticulum membrane. The enzyme catalyses (R)-mevalonate + 2 NADP(+) + CoA = (3S)-3-hydroxy-3-methylglutaryl-CoA + 2 NADPH + 2 H(+). It functions in the pathway metabolic intermediate biosynthesis; (R)-mevalonate biosynthesis; (R)-mevalonate from acetyl-CoA: step 3/3. Catalyzes the synthesis of mevalonate. The specific precursor of all isoprenoid compounds present in plants. The polypeptide is 3-hydroxy-3-methylglutaryl-coenzyme A reductase 1 (HMG1) (Oryza sativa subsp. japonica (Rice)).